The following is a 263-amino-acid chain: MREAVIAEVSTQLSEVVGVIERHLEPTLLAVHLYGSAVDGGLKPHSDIDLLVTVTVRLDETTRRALINDLLETSASPGESEILRAVEVTIVVHDDIIPWRYPAKRELQFGEWQRNDILAGIFEPATIDIDLAILLTKAREHSVALVGPAAEELFDPVPEQDLFEALNETLTLWNSPPDWAGDERNVVLTLSRIWYSAVTGKIAPKDVAADWAMERLPAQYQPVILEARQAYLGQEEDRLASRADQLEEFVHYVKGEITKVVGK.

The enzyme catalyses streptomycin + ATP = 3''-O-adenylylstreptomycin + diphosphate. The catalysed reaction is spectinomycin + ATP = 9-O-adenylylspectinomycin + diphosphate. Its function is as follows. Mediates bacterial resistance to the antibiotics streptomycin and spectinomycin. The chain is Aminoglycoside (3'') (9) adenylyltransferase from Escherichia coli.